Consider the following 1260-residue polypeptide: Neural cell adhesion molecule L1 (1260 aa).

The first 19 residues, 1–19, serve as a signal peptide directing secretion; that stretch reads MVVMLRYVWPLLLCSPCLL. Residues 20 to 1123 are Extracellular-facing; sequence IQIPDEYKGH…VSTTGSFASE (1104 aa). Ig-like C2-type domains are found at residues 35-130, 138-225, 239-327, 332-419, 424-506, and 517-600; these read PVIT…IQLV, PKET…EPID, PRLL…YYVT, PYWL…AYIY, PARI…NNVT, and TQIT…DEVE. 2 disulfide bridges follow: cysteine 57/cysteine 113 and cysteine 157/cysteine 208. N-linked (GlcNAc...) asparagine glycosylation is found at asparagine 100, asparagine 202, asparagine 246, and asparagine 293. 2 disulfide bridges follow: cysteine 263/cysteine 311 and cysteine 353/cysteine 403. 4 N-linked (GlcNAc...) asparagine glycosylation sites follow: asparagine 432, asparagine 478, asparagine 489, and asparagine 504. A disulfide bond links cysteine 447 and cysteine 496. Residues cysteine 538 and cysteine 590 are joined by a disulfide bond. Short sequence motifs (cell attachment site) lie at residues 553–555 and 562–564; these read RGD. Residues asparagine 587 and asparagine 670 are each glycosylated (N-linked (GlcNAc...) asparagine). 5 Fibronectin type-III domains span residues 613–711, 716–809, 811–916, 919–1015, and 1014–1112; these read PVPH…TPEA, NPVD…SGED, PQVS…PEGV, HPEA…MALF, and LFGK…TGPV. A disordered region spans residues 697–724; sequence GEPSPVSESVVTPEAAPEKNPVDVRGEG. Residues 712–724 show a composition bias toward basic and acidic residues; it reads APEKNPVDVRGEG. N-linked (GlcNAc...) asparagine glycosylation is found at asparagine 725, asparagine 776, asparagine 824, asparagine 848, asparagine 875, asparagine 968, asparagine 978, asparagine 1022, asparagine 1030, asparagine 1073, and asparagine 1107. Residues 1124–1146 form a helical membrane-spanning segment; sequence GWFIAFVSAIILLLLILLILCFI. Topologically, residues 1147-1260 are cytoplasmic; it reads KRSKGGKYSV…SPINPAVALE (114 aa). A phosphoserine mark is found at serine 1166, serine 1181, serine 1184, serine 1197, serine 1246, serine 1247, and serine 1251. Disordered regions lie at residues 1183–1210 and 1229–1260; these read ESDN…SDDS and IGQY…VALE. The span at 1244 to 1253 shows a compositional bias: polar residues; it reads NDSSGATSPI.

This sequence belongs to the immunoglobulin superfamily. L1/neurofascin/NgCAM family. As to quaternary structure, interacts with SHTN1; the interaction occurs in axonal growth cones. Interacts with isoform 2 of BSG. In terms of tissue distribution, expressed in the brain, including in the molecular layer of the cerebellar cortex, the fiber-rich layers of the hippocampus (alveus, and strata lacunosum moleculare, radiatum, and oriens), the nerve fiber layer and the inner and outer plexiform layers of the retina, and in the molecular layer of the olfactory bulb (at protein level).

The protein localises to the cell membrane. It is found in the cell projection. The protein resides in the growth cone. Functionally, neural cell adhesion molecule involved in the dynamics of cell adhesion and in the generation of transmembrane signals at tyrosine kinase receptors. During brain development, critical in multiple processes, including neuronal migration, axonal growth and fasciculation, and synaptogenesis. In the mature brain, plays a role in the dynamics of neuronal structure and function, including synaptic plasticity. The sequence is that of Neural cell adhesion molecule L1 (L1cam) from Mus musculus (Mouse).